Consider the following 365-residue polypeptide: Probable L-tyrosine/L-aspartate decarboxylase (365 aa).

Lysine 224 carries the N6-(pyridoxal phosphate)lysine modification.

It belongs to the group II decarboxylase family. MfnA subfamily. Pyridoxal 5'-phosphate is required as a cofactor.

The enzyme catalyses L-tyrosine + H(+) = tyramine + CO2. It carries out the reaction L-aspartate + H(+) = beta-alanine + CO2. It participates in cofactor biosynthesis; methanofuran biosynthesis. The protein operates within cofactor biosynthesis; coenzyme A biosynthesis. In terms of biological role, catalyzes the decarboxylation of L-tyrosine to produce tyramine for methanofuran biosynthesis. Can also catalyze the decarboxylation of L-aspartate to produce beta-alanine for coenzyme A (CoA) biosynthesis. The protein is Probable L-tyrosine/L-aspartate decarboxylase of Methanoregula boonei (strain DSM 21154 / JCM 14090 / 6A8).